Consider the following 376-residue polypeptide: Succinyl-diaminopimelate desuccinylase (376 aa).

Residue His67 participates in Zn(2+) binding. Asp69 is a catalytic residue. Asp100 contacts Zn(2+). Glu134 (proton acceptor) is an active-site residue. Positions 135, 163, and 349 each coordinate Zn(2+).

It belongs to the peptidase M20A family. DapE subfamily. As to quaternary structure, homodimer. The cofactor is Zn(2+). Co(2+) is required as a cofactor.

It carries out the reaction N-succinyl-(2S,6S)-2,6-diaminopimelate + H2O = (2S,6S)-2,6-diaminopimelate + succinate. Its pathway is amino-acid biosynthesis; L-lysine biosynthesis via DAP pathway; LL-2,6-diaminopimelate from (S)-tetrahydrodipicolinate (succinylase route): step 3/3. In terms of biological role, catalyzes the hydrolysis of N-succinyl-L,L-diaminopimelic acid (SDAP), forming succinate and LL-2,6-diaminopimelate (DAP), an intermediate involved in the bacterial biosynthesis of lysine and meso-diaminopimelic acid, an essential component of bacterial cell walls. In Shewanella denitrificans (strain OS217 / ATCC BAA-1090 / DSM 15013), this protein is Succinyl-diaminopimelate desuccinylase.